We begin with the raw amino-acid sequence, 206 residues long: Small ribosomal subunit protein uS4 (206 aa).

The S4 RNA-binding domain occupies 96 to 157 (SRLDNVVYRM…KAQKQLRVQA (62 aa)).

Belongs to the universal ribosomal protein uS4 family. In terms of assembly, part of the 30S ribosomal subunit. Contacts protein S5. The interaction surface between S4 and S5 is involved in control of translational fidelity.

Functionally, one of the primary rRNA binding proteins, it binds directly to 16S rRNA where it nucleates assembly of the body of the 30S subunit. With S5 and S12 plays an important role in translational accuracy. The sequence is that of Small ribosomal subunit protein uS4 from Alkalilimnicola ehrlichii (strain ATCC BAA-1101 / DSM 17681 / MLHE-1).